Here is a 337-residue protein sequence, read N- to C-terminus: MSSLSPASEVILRHLDHFADRHVLIAGDLQDTLASQIQAKSVRAYTNQYHQWLPLLKSMGDNAFFGLAADQSFVKYCDTLIYFWPKNKNEATFQLRSLCASLSVGTEIFIVGENRSGVKSATELMNGIAKLKKIDSARRCSLFFGSLTYQTLFDRNNWWQTYRYDDLTVMALPGVFSQTALDEGSRLLLSTFDDAMVGDLLDMACGCGVIATVLGKKNPMLKLTLCDVNAAAISSSIATLNVNELEGRVIASNVYSAVEETYDWIVSNPPFHDGLGTSYQAAEDIIRLAPNFLKKGGKLRIVANAFLPYQDILDHVFGSHEVLASTGKFKVYQATKK.

The protein belongs to the methyltransferase superfamily. RsmC family. In terms of assembly, monomer.

It localises to the cytoplasm. It catalyses the reaction guanosine(1207) in 16S rRNA + S-adenosyl-L-methionine = N(2)-methylguanosine(1207) in 16S rRNA + S-adenosyl-L-homocysteine + H(+). Its function is as follows. Specifically methylates the guanine in position 1207 of 16S rRNA in the 30S particle. This chain is Ribosomal RNA small subunit methyltransferase C, found in Proteus mirabilis (strain HI4320).